A 147-amino-acid chain; its full sequence is Myosin regulatory light chain (147 aa).

Residue T1 is modified to N-acetylthreonine. EF-hand domains follow at residues A2 to N37, E73 to A108, and L109 to L144. Positions 15, 17, 19, 21, 26, 86, 90, 92, and 97 each coordinate Ca(2+).

This chain is Myosin regulatory light chain, found in Physarum polycephalum (Slime mold).